Consider the following 95-residue polypeptide: Integration host factor subunit beta (95 aa).

Belongs to the bacterial histone-like protein family. In terms of assembly, heterodimer of an alpha and a beta chain.

Its function is as follows. This protein is one of the two subunits of integration host factor, a specific DNA-binding protein that functions in genetic recombination as well as in transcriptional and translational control. The protein is Integration host factor subunit beta of Shewanella loihica (strain ATCC BAA-1088 / PV-4).